Consider the following 690-residue polypeptide: Elongation factor G (690 aa).

Positions 8–283 (SRCRNIGIMA…AVVDFLPSPS (276 aa)) constitute a tr-type G domain. Residues 17–24 (AHIDAGKT), 81–85 (DTPGH), and 135–138 (NKMD) contribute to the GTP site.

This sequence belongs to the TRAFAC class translation factor GTPase superfamily. Classic translation factor GTPase family. EF-G/EF-2 subfamily.

Its subcellular location is the cytoplasm. Functionally, catalyzes the GTP-dependent ribosomal translocation step during translation elongation. During this step, the ribosome changes from the pre-translocational (PRE) to the post-translocational (POST) state as the newly formed A-site-bound peptidyl-tRNA and P-site-bound deacylated tRNA move to the P and E sites, respectively. Catalyzes the coordinated movement of the two tRNA molecules, the mRNA and conformational changes in the ribosome. The polypeptide is Elongation factor G (Anaplasma marginale (strain Florida)).